The following is a 353-amino-acid chain: Galectin-9 (353 aa).

The Galectin 1 domain maps to 17 to 147 (FTGPIQGGLQ…CLKLSFITFQ (131 aa)). Residues N47, H60, R64, N74, and 81 to 87 (WGPEERK) each bind a beta-D-galactoside. The disordered stretch occupies residues 167–186 (QFPRTPKGRKQKTQNFRPAH). A Galectin 2 domain is found at 225-353 (FYTPIPNGLY…GDIQLTHVQT (129 aa)). A beta-D-galactoside is bound by residues H265, R269, T279, and 285–291 (WGQEERS).

In terms of assembly, homodimer. Accentuated expression in liver and thymus of embryo, detected in embryonic heart, brain, lung, liver, and kidney. Highly expressed in adult thymus, small intestine, and liver, and to a lesser extent in lung, kidney, spleen, cardiac, and skeletal muscle. Barely detectable in brain and reticulocyte. Expressed in placenta, uterus and decidua during pregnancy. Expressed in CD4+ T-cells with higher levels in iTreg cells than other T-cell types and sustained high levels throughout iTreg cell differentiation (at protein level). Expressed in myeloid cells in lung. Constitutively expressed in microglia. Isoform 1 is expressed exclusively in the small intestine. Isoform 2 expression in decidua increases in pathological pregnancy from gestation day 7.5 to 13.5 and it is higher than in normal pregnancy. Isoform 3 expression in decidua is higher in normal pregnancy than in pathological pregnancy.

Its subcellular location is the cytoplasm. The protein localises to the nucleus. It localises to the secreted. Binds galactosides. Has high affinity for the Forssman pentasaccharide. Ligand for HAVCR2/TIM3. Binding to HAVCR2 induces T-helper type 1 lymphocyte (Th1) death. Also stimulates bactericidal activity in infected macrophages by causing macrophage activation and IL1B secretion which restricts intracellular bacterial growth. Ligand for P4HB; the interaction retains P4HB at the cell surface of Th2 T-helper cells, increasing disulfide reductase activity at the plasma membrane, altering the plasma membrane redox state and enhancing cell migration. Ligand for CD44; the interaction enhances binding of SMAD3 to the FOXP3 promoter, leading to up-regulation of FOXP3 expression and increased induced regulatory T (iTreg) cell stability and suppressive function. Promotes ability of mesenchymal stromal cells to suppress T-cell proliferation. Expands regulatory T-cells and induces cytotoxic T-cell apoptosis following virus infection. Activates ERK1/2 phosphorylation inducing cytokine (IL-6, IL-8, IL-12) and chemokine (CCL2) production in mast and dendritic cells. Inhibits degranulation and induces apoptosis of mast cells. Induces maturation and migration of dendritic cells. Inhibits natural killer (NK) cell function. Can transform NK cell phenotype from peripheral to decidual during pregnancy. Astrocyte derived galectin-9 enhances microglial TNF production. May play a role in thymocyte-epithelial interactions relevant to the biology of the thymus. May provide the molecular basis for urate flux across cell membranes, allowing urate that is formed during purine metabolism to efflux from cells and serving as an electrogenic transporter that plays an important role in renal and gastrointestinal urate excretion. Highly selective to the anion urate. In terms of biological role, acts as an eosinophil chemoattractant. It also inhibits angiogenesis. Suppresses IFNG production by natural killer cells. The polypeptide is Galectin-9 (Lgals9) (Mus musculus (Mouse)).